The chain runs to 682 residues: Epithelial sodium channel subunit alpha (682 aa).

Topologically, residues 1–111 are cytoplasmic; it reads MLMRLLPLPS…CSKHNRMKTA (111 aa). Residues 34–69 are disordered; the sequence is AQGPLPPQPLQGPLKGDKCEQPGLGPEPTAPQQHTE. Residues 112–132 form a helical membrane-spanning segment; that stretch reads FWAVLWLCTFGMMYWQFALLF. Over 133–586 the chain is Extracellular; that stretch reads GEYFSYPVSL…SQWSLWFGSS (454 aa). 10 disulfide bridges follow: Cys-159/Cys-329, Cys-253/Cys-260, Cys-306/Cys-313, Cys-418/Cys-503, Cys-440/Cys-480, Cys-440/Cys-499, Cys-444/Cys-495, Cys-453/Cys-480, Cys-453/Cys-503, and Cys-455/Cys-469. A glycan (N-linked (GlcNAc...) asparagine) is linked at Asn-191. Positions 201–267 are gating release of inhibition by proteolysis (GRIP); protease-sensitive region that is responsible for the proteolytic activation of the channel; it reads RSRRSLADTL…SDCFYQTSSS (67 aa). A disordered region spans residues 221–240; it reads PEPRRARSSDPSSVRDNNPR. Asn-504 is a glycosylation site (N-linked (GlcNAc...) asparagine). A helical membrane pass occupies residues 587 to 607; the sequence is VLSVVEMAEFMFDLLVITLLM. At 608-682 the chain is on the cytoplasmic side; that stretch reads LLRRFRSRYW…SSAACAPREP (75 aa). The short motif at 653 to 657 is the PY motif; recruits WW domain-containing proteins and is thereby required for ubiquitination and inhibition of the channel by NEDD4 and NEDD4L element; the sequence is PPPAY.

This sequence belongs to the amiloride-sensitive sodium channel (TC 1.A.6) family. SCNN1A subfamily. As to quaternary structure, heterotrimer; containing an alpha/SCNN1A, a beta/SCNN1B and a gamma/SCNN1G subunit. Interacts with WWP1 (via WW domains). Interacts with WWP2 (via WW domains); inhibits the channel. Interacts with BPIFA1; the interaction is indirect via SCNN1B and inhibits the proteolytic processing of SCNN1A and SCNN1G and the activation of ENaC. Interacts with the full-length immature form of PCSK9 (pro-PCSK9). Ubiquitinated. Can be ubiquitinated at multiple sites and undergo monoubiquitination and polyubiquitination. Ubiquitination by NEDD4 or NEDD4L inhibits the ENaC channel through endocytosis, intracellular retention and degradation of its individual subunits. In terms of processing, N-glycosylated. Post-translationally, ENaC is activated through the proteolytic maturation of its subunits. Furin cleaves the SCNN1A subunit, which results in a stepwise increase in the open probability of the channel due to the release of an inhibitory tract. BPIFA1, which is recruited by the SCNN1B subunit, prevents the proteolytic activation of ENaC.

Its subcellular location is the apical cell membrane. It localises to the cell projection. The protein localises to the cilium. The protein resides in the cytoplasmic granule. It is found in the cytoplasm. Its subcellular location is the cytoplasmic vesicle. It localises to the secretory vesicle. The protein localises to the acrosome. The protein resides in the flagellum. The enzyme catalyses Na(+)(in) = Na(+)(out). Originally identified and characterized by its inhibition by the diuretic drug amiloride. Its function is as follows. This is one of the three pore-forming subunits of the heterotrimeric epithelial sodium channel (ENaC), a critical regulator of sodium balance and fluid homeostasis. ENaC operates in epithelial tissues, where it mediates the electrodiffusion of sodium ions from extracellular fluid through the apical membrane of cells, with water following osmotically. It plays a key role in maintaining sodium homeostasis through electrogenic sodium reabsorption in the kidneys. Additionally, ENaC is essential for airway surface liquid homeostasis, which is crucial for proper mucus clearance. This Cavia porcellus (Guinea pig) protein is Epithelial sodium channel subunit alpha.